The primary structure comprises 351 residues: Uroporphyrinogen decarboxylase (351 aa).

Substrate is bound by residues 25–29 (RQAGR), D74, Y151, S206, and H325.

It belongs to the uroporphyrinogen decarboxylase family. As to quaternary structure, homodimer.

The protein resides in the cytoplasm. The enzyme catalyses uroporphyrinogen III + 4 H(+) = coproporphyrinogen III + 4 CO2. It participates in porphyrin-containing compound metabolism; protoporphyrin-IX biosynthesis; coproporphyrinogen-III from 5-aminolevulinate: step 4/4. Catalyzes the decarboxylation of four acetate groups of uroporphyrinogen-III to yield coproporphyrinogen-III. The chain is Uroporphyrinogen decarboxylase from Chlorobium luteolum (strain DSM 273 / BCRC 81028 / 2530) (Pelodictyon luteolum).